We begin with the raw amino-acid sequence, 186 residues long: Small ribosomal subunit protein uS4 (186 aa).

Positions 106–170 (RRLQTIVYRK…SPLKDEDHPI (65 aa)) constitute an S4 RNA-binding domain. The tract at residues 151 to 186 (EEEEVDYSPYSPLKDEDHPIRCEARGESPEETAAEE) is disordered. Basic and acidic residues predominate over residues 163–178 (LKDEDHPIRCEARGES).

This sequence belongs to the universal ribosomal protein uS4 family. Part of the 30S ribosomal subunit. Contacts protein S5. The interaction surface between S4 and S5 is involved in control of translational fidelity.

In terms of biological role, one of the primary rRNA binding proteins, it binds directly to 16S rRNA where it nucleates assembly of the body of the 30S subunit. Functionally, with S5 and S12 plays an important role in translational accuracy. The protein is Small ribosomal subunit protein uS4 of Methanopyrus kandleri (strain AV19 / DSM 6324 / JCM 9639 / NBRC 100938).